Reading from the N-terminus, the 497-residue chain is Acetyl-coenzyme A carboxylase carboxyl transferase subunit beta (497 aa).

The region spanning 217–489 (LWLQCDNCYG…NQNSNQYSQY (273 aa)) is the CoA carboxyltransferase N-terminal domain. Residues Cys221, Cys224, Cys240, and Cys243 each coordinate Zn(2+). The segment at 221 to 243 (CDNCYGLNYKKVLKSKMTICEQC) adopts a C4-type zinc-finger fold.

It belongs to the AccD/PCCB family. Acetyl-CoA carboxylase is a heterohexamer composed of biotin carboxyl carrier protein, biotin carboxylase and 2 subunits each of ACCase subunit alpha and ACCase plastid-coded subunit beta (accD). Zn(2+) is required as a cofactor.

The protein resides in the plastid. It catalyses the reaction N(6)-carboxybiotinyl-L-lysyl-[protein] + acetyl-CoA = N(6)-biotinyl-L-lysyl-[protein] + malonyl-CoA. The protein operates within lipid metabolism; malonyl-CoA biosynthesis; malonyl-CoA from acetyl-CoA: step 1/1. In terms of biological role, component of the acetyl coenzyme A carboxylase (ACC) complex. Biotin carboxylase (BC) catalyzes the carboxylation of biotin on its carrier protein (BCCP) and then the CO(2) group is transferred by the transcarboxylase to acetyl-CoA to form malonyl-CoA. The polypeptide is Acetyl-coenzyme A carboxylase carboxyl transferase subunit beta (Cuscuta reflexa (Southern Asian dodder)).